The chain runs to 74 residues: uncharacterized protein (74 aa).

Residues 20-40 (IYSYTLLTLLVITLICYLIHI) form a helical membrane-spanning segment.

It belongs to the asfivirus KP93L family.

The protein localises to the host membrane. This is an uncharacterized protein from African swine fever virus (isolate Tick/South Africa/Pretoriuskop Pr4/1996) (ASFV).